Reading from the N-terminus, the 252-residue chain is Thiazole synthase (252 aa).

Lysine 91 acts as the Schiff-base intermediate with DXP in catalysis. 1-deoxy-D-xylulose 5-phosphate-binding positions include glycine 152, alanine 179–glycine 180, and asparagine 201–threonine 202.

The protein belongs to the ThiG family. In terms of assembly, homotetramer. Forms heterodimers with either ThiH or ThiS.

The protein resides in the cytoplasm. The enzyme catalyses [ThiS sulfur-carrier protein]-C-terminal-Gly-aminoethanethioate + 2-iminoacetate + 1-deoxy-D-xylulose 5-phosphate = [ThiS sulfur-carrier protein]-C-terminal Gly-Gly + 2-[(2R,5Z)-2-carboxy-4-methylthiazol-5(2H)-ylidene]ethyl phosphate + 2 H2O + H(+). The protein operates within cofactor biosynthesis; thiamine diphosphate biosynthesis. Functionally, catalyzes the rearrangement of 1-deoxy-D-xylulose 5-phosphate (DXP) to produce the thiazole phosphate moiety of thiamine. Sulfur is provided by the thiocarboxylate moiety of the carrier protein ThiS. In vitro, sulfur can be provided by H(2)S. The protein is Thiazole synthase of Erwinia pyrifoliae (strain DSM 12162 / Ep1/96).